We begin with the raw amino-acid sequence, 156 residues long: 6,7-dimethyl-8-ribityllumazine synthase (156 aa).

5-amino-6-(D-ribitylamino)uracil contacts are provided by residues Phe-22, 57 to 59 (AYE), and 81 to 83 (TVI). Residue 86-87 (GT) participates in (2S)-2-hydroxy-3-oxobutyl phosphate binding. His-89 (proton donor) is an active-site residue. Phe-114 is a binding site for 5-amino-6-(D-ribitylamino)uracil. Arg-128 provides a ligand contact to (2S)-2-hydroxy-3-oxobutyl phosphate.

This sequence belongs to the DMRL synthase family. In terms of assembly, forms an icosahedral capsid composed of 60 subunits, arranged as a dodecamer of pentamers.

It catalyses the reaction (2S)-2-hydroxy-3-oxobutyl phosphate + 5-amino-6-(D-ribitylamino)uracil = 6,7-dimethyl-8-(1-D-ribityl)lumazine + phosphate + 2 H2O + H(+). It participates in cofactor biosynthesis; riboflavin biosynthesis; riboflavin from 2-hydroxy-3-oxobutyl phosphate and 5-amino-6-(D-ribitylamino)uracil: step 1/2. In terms of biological role, catalyzes the formation of 6,7-dimethyl-8-ribityllumazine by condensation of 5-amino-6-(D-ribitylamino)uracil with 3,4-dihydroxy-2-butanone 4-phosphate. This is the penultimate step in the biosynthesis of riboflavin. The sequence is that of 6,7-dimethyl-8-ribityllumazine synthase from Enterobacter sp. (strain 638).